The chain runs to 163 residues: tRNA-acetylating toxin 2 (163 aa).

Residue tyrosine 137 is part of the active site.

This sequence belongs to the acetyltransferase family. GNAT subfamily. As to quaternary structure, homodimer. Forms a complex with cognate antitoxin TacA2.

It catalyses the reaction glycyl-tRNA(Gly) + acetyl-CoA = N-acetylglycyl-tRNA(Gly) + CoA + H(+). It carries out the reaction L-isoleucyl-tRNA(Ile) + acetyl-CoA = N-acetyl-L-isoleucyl-tRNA(Ile) + CoA + H(+). The enzyme catalyses L-leucyl-tRNA(Leu) + acetyl-CoA = N-acetyl-L-leucyl-tRNA(Leu) + CoA + H(+). Functionally, toxic component of a type II toxin-antitoxin (TA) system. Acetylates tRNA and inhibits translation. Acetylates mainly Gly and Ile/Leu in vitro. Overexpression during the lag phase of a tacA2-tacT2 deletion strain leads to a 100-fold increase in persister cells in the presence of cefotaxime and a non-growth state in the absence of antibiotic. This protein, which has a single amino acid compared to S.typhimurium strain 14028s (Lys-29 is Glu in 14028s), produces 100-fold more persister cells, has much higher acetylation activity and binds tRNA much better. Persister cell formation and the growth defect are neutralized by cognate antitoxin TacA2. In terms of biological role, the TacA2-TacT2 complex both represses and derepresses expression of its own operon. This chain is tRNA-acetylating toxin 2, found in Salmonella enteritidis.